The primary structure comprises 875 residues: Alanine--tRNA ligase (875 aa).

Positions 562, 566, 665, and 669 each coordinate Zn(2+).

This sequence belongs to the class-II aminoacyl-tRNA synthetase family. It depends on Zn(2+) as a cofactor.

It is found in the cytoplasm. The catalysed reaction is tRNA(Ala) + L-alanine + ATP = L-alanyl-tRNA(Ala) + AMP + diphosphate. Its function is as follows. Catalyzes the attachment of alanine to tRNA(Ala) in a two-step reaction: alanine is first activated by ATP to form Ala-AMP and then transferred to the acceptor end of tRNA(Ala). Also edits incorrectly charged Ser-tRNA(Ala) and Gly-tRNA(Ala) via its editing domain. In Saccharophagus degradans (strain 2-40 / ATCC 43961 / DSM 17024), this protein is Alanine--tRNA ligase.